The sequence spans 665 residues: Cinnamate reductase (665 aa).

Gln109 serves as a coordination point for FMN. Catalysis depends on Tyr182, which acts as the Proton donor. Residues Arg230, Arg319, and 341-342 each bind FMN; that span reads GR. Cys365, Cys368, Cys372, and Cys384 together coordinate [4Fe-4S] cluster. 5 residues coordinate FAD: Ala415, Glu434, Asn442, Lys452, and Ala479.

In the N-terminal section; belongs to the NADH:flavin oxidoreductase/NADH oxidase family. FMN is required as a cofactor. Requires FAD as cofactor. It depends on [4Fe-4S] cluster as a cofactor.

The enzyme catalyses 3-phenylpropanoate + NAD(+) = (E)-cinnamate + NADH + H(+). The protein operates within amino-acid degradation; L-phenylalanine degradation. Functionally, involved in the fermentation of L-phenylalanine via a Stickland reaction. Catalyzes the reduction of (E)-cinnamate to yield 3-phenylpropionate. The chain is Cinnamate reductase from Clostridium sporogenes (strain ATCC 7955 / DSM 767 / NBRC 16411 / NCIMB 8053 / NCTC 8594 / PA 3679).